Here is a 186-residue protein sequence, read N- to C-terminus: Iodotyrosine deiodinase (186 aa).

FMN-binding positions include 11-15 (RKTVR), 38-39 (PS), and Ser39. The 3-iodo-L-tyrosine site is built by Met41, Glu68, Tyr72, and Lys92. 4 residues coordinate L-tyrosine: Met41, Glu68, Tyr72, and Lys92. Arg176 lines the FMN pocket.

The protein belongs to the nitroreductase family. As to quaternary structure, homodimer. FMN is required as a cofactor.

The catalysed reaction is 2 iodide + L-tyrosine + 2 NADP(+) = 3,5-diiodo-L-tyrosine + 2 NADPH + H(+). It carries out the reaction iodide + L-tyrosine + NADP(+) = 3-iodo-L-tyrosine + NADPH. It catalyses the reaction 3-iodo-L-tyrosine + iodide + NADP(+) = 3,5-diiodo-L-tyrosine + NADPH + H(+). The enzyme catalyses L-tyrosine + chloride + NADP(+) = 3-chloro-L-tyrosine + NADPH. The catalysed reaction is bromide + L-tyrosine + NADP(+) = 3-bromo-L-tyrosine + NADPH. Functionally, catalyzes the dehalogenation of halotyrosines such as 3-bromo-L-tyrosine, 3-chloro-L-tyrosine, 3-iodo-L-tyrosine and 3,5-diiodo-L-tyrosine. Activity towards 2-iodophenol is weak. The protein is Iodotyrosine deiodinase of Thermotoga neapolitana (strain ATCC 49049 / DSM 4359 / NBRC 107923 / NS-E).